The chain runs to 567 residues: MFS-type transporter poxA (567 aa).

Over residues 1 to 23 (MPASDRTSETGDVEKVTAAETPK) the composition is skewed to basic and acidic residues. A disordered region spans residues 1–24 (MPASDRTSETGDVEKVTAAETPKE). A run of 10 helical transmembrane segments spans residues 35–55 (ALTG…LFLG), 77–97 (ADIG…QLLA), 108–128 (LVFL…GVAV), 141–161 (GAGA…VVPL), 165–185 (SLIL…GPVI), 197–217 (WCFY…ILFF), 240–260 (LAGC…LQWG), 271–291 (SATI…FLIW), 311–331 (IIAS…VGYF), and 349–369 (VMLL…GVIV). Residue Asn-370 is glycosylated (N-linked (GlcNAc...) asparagine). Transmembrane regions (helical) follow at residues 372–392 (TGYF…GSGL), 410–430 (ILQG…QVAL), 436–456 (LIPV…SIML), and 515–535 (AIAG…LVSF). Positions 547–567 (EENKKEAAEEEEEVKVAAVEA) are disordered.

Belongs to the major facilitator superfamily. TCR/Tet family.

The protein localises to the cell membrane. In terms of biological role, MFS-type transporter; part of the gene cluster that mediates the biosynthesis of oxaleimides, cytotoxic compounds containing an unusual disubstituted succinimide moiety. This is MFS-type transporter poxA from Penicillium oxalicum (strain 114-2 / CGMCC 5302) (Penicillium decumbens).